Reading from the N-terminus, the 295-residue chain is Small ribosomal subunit protein uS2 (295 aa).

The segment at Q261 to A295 is disordered.

The protein belongs to the universal ribosomal protein uS2 family.

The protein is Small ribosomal subunit protein uS2 of Rickettsia rickettsii (strain Sheila Smith).